We begin with the raw amino-acid sequence, 48 residues long: Sperm protamine P1 (48 aa).

Belongs to the protamine P1 family. Cross-linked by interchain disulfide bonds around the DNA-helix. In terms of tissue distribution, testis.

Its subcellular location is the nucleus. The protein localises to the chromosome. Its function is as follows. Protamines substitute for histones in the chromatin of sperm during the haploid phase of spermatogenesis. They compact sperm DNA into a highly condensed, stable and inactive complex. The chain is Sperm protamine P1 (PRM1) from Cavia porcellus (Guinea pig).